Here is a 121-residue protein sequence, read N- to C-terminus: Small ribosomal subunit protein uS13 (121 aa).

Positions His91–Lys121 are disordered.

This sequence belongs to the universal ribosomal protein uS13 family. As to quaternary structure, part of the 30S ribosomal subunit. Forms a loose heterodimer with protein S19. Forms two bridges to the 50S subunit in the 70S ribosome.

Functionally, located at the top of the head of the 30S subunit, it contacts several helices of the 16S rRNA. In the 70S ribosome it contacts the 23S rRNA (bridge B1a) and protein L5 of the 50S subunit (bridge B1b), connecting the 2 subunits; these bridges are implicated in subunit movement. Contacts the tRNAs in the A and P-sites. The chain is Small ribosomal subunit protein uS13 from Bordetella avium (strain 197N).